Consider the following 623-residue polypeptide: Transketolase (623 aa).

Met1 is subject to N-acetylmethionine. An N6-acetyllysine mark is found at Lys6 and Lys11. His37 contacts substrate. Thiamine diphosphate contacts are provided by Ser40 and His77. Ser104 carries the phosphoserine modification. Residue 123-125 (GSL) participates in thiamine diphosphate binding. Lys144 carries the post-translational modification N6-acetyllysine. Position 155 (Asp155) interacts with Mg(2+). Thiamine diphosphate-binding residues include Gly156 and Asn185. Positions 185 and 187 each coordinate Mg(2+). An N6-acetyllysine mark is found at Lys204, Lys232, and Lys241. Positions 244 and 258 each coordinate thiamine diphosphate. Position 258 (His258) interacts with substrate. N6-acetyllysine is present on Lys260. Tyr275 is subject to Phosphotyrosine. The residue at position 287 (Thr287) is a Phosphothreonine. Phosphoserine is present on Ser295. Substrate contacts are provided by Arg318 and Ser345. Ser345 bears the Phosphoserine mark. Lys352 is covalently cross-linked (Glycyl lysine isopeptide (Lys-Gly) (interchain with G-Cter in SUMO2)). Residue Glu366 is the Proton donor of the active site. Phe392 serves as a coordination point for thiamine diphosphate. His416 and Asp424 together coordinate substrate. Thiamine diphosphate is bound at residue Gln428. Arg474 contacts substrate. N6-acetyllysine occurs at positions 538 and 603.

The protein belongs to the transketolase family. As to quaternary structure, homodimer. Mg(2+) is required as a cofactor. The cofactor is Ca(2+). Mn(2+) serves as cofactor. Requires Co(2+) as cofactor. It depends on thiamine diphosphate as a cofactor.

The catalysed reaction is D-sedoheptulose 7-phosphate + D-glyceraldehyde 3-phosphate = aldehydo-D-ribose 5-phosphate + D-xylulose 5-phosphate. Catalyzes the transfer of a two-carbon ketol group from a ketose donor to an aldose acceptor, via a covalent intermediate with the cofactor thiamine pyrophosphate. The protein is Transketolase (Tkt) of Rattus norvegicus (Rat).